Reading from the N-terminus, the 159-residue chain is MTQLTHINTAGEAHMVDVSAKNETVREARAEAFVDMQAATLAMIIDGSHHKGDVFATARIAGIQAAKKTWELIPLCHPLLLTKVEVKLEAQPEHNRVRIETCCRLTGKTGVEMEALTAASVAALTIYDMCKAVQKDMIIGPVRLLTKSGGKSGDFKVDI.

Residues Leu-75 to His-77 and Met-113 to Glu-114 each bind substrate. The active site involves Asp-128.

The protein belongs to the MoaC family. As to quaternary structure, homohexamer; trimer of dimers.

It carries out the reaction (8S)-3',8-cyclo-7,8-dihydroguanosine 5'-triphosphate = cyclic pyranopterin phosphate + diphosphate. Its pathway is cofactor biosynthesis; molybdopterin biosynthesis. Functionally, catalyzes the conversion of (8S)-3',8-cyclo-7,8-dihydroguanosine 5'-triphosphate to cyclic pyranopterin monophosphate (cPMP). The protein is Cyclic pyranopterin monophosphate synthase of Yersinia pseudotuberculosis serotype O:1b (strain IP 31758).